A 135-amino-acid polypeptide reads, in one-letter code: Ribosome-binding factor A (135 aa).

Belongs to the RbfA family. In terms of assembly, monomer. Binds 30S ribosomal subunits, but not 50S ribosomal subunits or 70S ribosomes.

The protein resides in the cytoplasm. In terms of biological role, one of several proteins that assist in the late maturation steps of the functional core of the 30S ribosomal subunit. Associates with free 30S ribosomal subunits (but not with 30S subunits that are part of 70S ribosomes or polysomes). Required for efficient processing of 16S rRNA. May interact with the 5'-terminal helix region of 16S rRNA. In Aliivibrio fischeri (strain ATCC 700601 / ES114) (Vibrio fischeri), this protein is Ribosome-binding factor A.